The following is a 96-amino-acid chain: Large ribosomal subunit protein bL28 (96 aa).

The interval 1–24 (MSRSCELTGKGVQSGHNVSHANNK) is disordered.

Belongs to the bacterial ribosomal protein bL28 family.

The polypeptide is Large ribosomal subunit protein bL28 (Sinorhizobium fredii (strain NBRC 101917 / NGR234)).